We begin with the raw amino-acid sequence, 406 residues long: Dual-specificity RNA methyltransferase RlmN (406 aa).

The active-site Proton acceptor is the glutamate 121. The Radical SAM core domain maps to 127–377 (ERDRGTLCVS…VRTPRGRDIL (251 aa)). The cysteines at positions 134 and 380 are disulfide-linked. 3 residues coordinate [4Fe-4S] cluster: cysteine 141, cysteine 145, and cysteine 148. S-adenosyl-L-methionine contacts are provided by residues 206–207 (GE), serine 238, 260–262 (SLH), and asparagine 337. Cysteine 380 acts as the S-methylcysteine intermediate in catalysis.

Belongs to the radical SAM superfamily. RlmN family. [4Fe-4S] cluster is required as a cofactor.

The protein resides in the cytoplasm. The catalysed reaction is adenosine(2503) in 23S rRNA + 2 reduced [2Fe-2S]-[ferredoxin] + 2 S-adenosyl-L-methionine = 2-methyladenosine(2503) in 23S rRNA + 5'-deoxyadenosine + L-methionine + 2 oxidized [2Fe-2S]-[ferredoxin] + S-adenosyl-L-homocysteine. It carries out the reaction adenosine(37) in tRNA + 2 reduced [2Fe-2S]-[ferredoxin] + 2 S-adenosyl-L-methionine = 2-methyladenosine(37) in tRNA + 5'-deoxyadenosine + L-methionine + 2 oxidized [2Fe-2S]-[ferredoxin] + S-adenosyl-L-homocysteine. Functionally, specifically methylates position 2 of adenine 2503 in 23S rRNA and position 2 of adenine 37 in tRNAs. m2A2503 modification seems to play a crucial role in the proofreading step occurring at the peptidyl transferase center and thus would serve to optimize ribosomal fidelity. This chain is Dual-specificity RNA methyltransferase RlmN, found in Azorhizobium caulinodans (strain ATCC 43989 / DSM 5975 / JCM 20966 / LMG 6465 / NBRC 14845 / NCIMB 13405 / ORS 571).